We begin with the raw amino-acid sequence, 483 residues long: Cobyric acid synthase (483 aa).

Residues 252–439 form the GATase cobBQ-type domain; that stretch reads KLNVVVPVLT…LHGFFDEAEA (188 aa). The Nucleophile role is filled by cysteine 333. Histidine 431 is a catalytic residue.

This sequence belongs to the CobB/CobQ family. CobQ subfamily.

It participates in cofactor biosynthesis; adenosylcobalamin biosynthesis. Functionally, catalyzes amidations at positions B, D, E, and G on adenosylcobyrinic A,C-diamide. NH(2) groups are provided by glutamine, and one molecule of ATP is hydrogenolyzed for each amidation. The sequence is that of Cobyric acid synthase from Vibrio parahaemolyticus serotype O3:K6 (strain RIMD 2210633).